We begin with the raw amino-acid sequence, 140 residues long: Large ribosomal subunit protein uL11 (140 aa).

Belongs to the universal ribosomal protein uL11 family. Part of the ribosomal stalk of the 50S ribosomal subunit. Interacts with L10 and the large rRNA to form the base of the stalk. L10 forms an elongated spine to which L12 dimers bind in a sequential fashion forming a multimeric L10(L12)X complex. In terms of processing, one or more lysine residues are methylated.

Functionally, forms part of the ribosomal stalk which helps the ribosome interact with GTP-bound translation factors. This is Large ribosomal subunit protein uL11 from Syntrophobacter fumaroxidans (strain DSM 10017 / MPOB).